We begin with the raw amino-acid sequence, 785 residues long: Ribosome biogenesis protein BOP1 homolog (785 aa).

The span at 1 to 11 shows a compositional bias: basic residues; sequence MTKKLTIKRKV. The disordered stretch occupies residues 1-160; sequence MTKKLTIKRK…DSDTSDEEDI (160 aa). Composition is skewed to acidic residues over residues 45–54, 61–73, and 85–102; these read EDSTDDEGID, SSED…DEEG, and SGDD…EDDA. Basic and acidic residues predominate over residues 103–112; the sequence is DAKKSSKNND. The span at 150-159 shows a compositional bias: acidic residues; the sequence is ADSDTSDEED. WD repeat units lie at residues 446–487, 489–527, 571–613, 616–654, 657–696, 700–739, and 755–785; these read GHTD…RTIE, EDVV…KLLV, THFK…SQIP, KSKG…LIKK, TNSK…KPYQ, LHRN…DLLQ, and REEF…RLFT.

The protein belongs to the WD repeat BOP1/ERB1 family.

The protein resides in the nucleus. It is found in the nucleolus. The protein localises to the nucleoplasm. Functionally, required for maturation of ribosomal RNAs and formation of the large ribosomal subunit. The chain is Ribosome biogenesis protein BOP1 homolog from Drosophila persimilis (Fruit fly).